Here is a 136-residue protein sequence, read N- to C-terminus: Protein PsiE (136 aa).

A run of 4 helical transmembrane segments spans residues 15–35 (ILQN…VLFL), 55–75 (YELV…ALIV), 82–102 (FHFP…RLII), and 108–128 (PMDV…LWLC).

The protein belongs to the PsiE family.

It is found in the cell inner membrane. The chain is Protein PsiE from Salmonella arizonae (strain ATCC BAA-731 / CDC346-86 / RSK2980).